The chain runs to 353 residues: Ribosomal RNA small subunit methyltransferase H (353 aa).

S-adenosyl-L-methionine-binding positions include 39–41 (AGH), D58, F90, D108, and Q115. The interval 334 to 353 (SEDGVRGAHGHRRRTQARRG) is disordered. Over residues 341–353 (AHGHRRRTQARRG) the composition is skewed to basic residues.

The protein belongs to the methyltransferase superfamily. RsmH family.

It localises to the cytoplasm. It carries out the reaction cytidine(1402) in 16S rRNA + S-adenosyl-L-methionine = N(4)-methylcytidine(1402) in 16S rRNA + S-adenosyl-L-homocysteine + H(+). In terms of biological role, specifically methylates the N4 position of cytidine in position 1402 (C1402) of 16S rRNA. The polypeptide is Ribosomal RNA small subunit methyltransferase H (Bifidobacterium animalis subsp. lactis (strain AD011)).